The following is a 280-amino-acid chain: Lipase chaperone (280 aa).

The chain crosses the membrane as a helical span at residues 5–22 (ALTIITIALGSLGAVYFL).

This sequence belongs to the lipase chaperone family.

It localises to the cell inner membrane. May be involved in the folding of the extracellular lipase during its passage through the periplasm. The polypeptide is Lipase chaperone (lifO) (Vibrio vulnificus (strain CMCP6)).